We begin with the raw amino-acid sequence, 402 residues long: Metacaspase-1 (402 aa).

Residues M1–P79 form a disordered region. Residues P23–Y45 show a composition bias toward low complexity. Residues H193 and C249 contribute to the active site.

Belongs to the peptidase C14B family.

Involved in cell death (apoptosis). The protein is Metacaspase-1 (MCA1) of Mycosarcoma maydis (Corn smut fungus).